The following is a 106-amino-acid chain: MVNYPKKKKMHCPDERCNAHKSFKVVQYKAGKARLYARGKRRYDRKQSGYGGQTKPIFHKKAKTTKKIVLKLQCSNCKSIIQNVLKRTKHFELNDKKKTGNKDPTW.

This sequence belongs to the eukaryotic ribosomal protein eL42 family.

It is found in the cytoplasm. This Trypanosoma brucei brucei protein is Large ribosomal subunit protein eL42 (RPL44).